Here is a 390-residue protein sequence, read N- to C-terminus: Multidrug resistance protein MdtL (390 aa).

12 helical membrane-spanning segments follow: residues 4 to 24, 42 to 62, 69 to 89, 93 to 113, 131 to 151, 158 to 178, 199 to 221, 245 to 265, 269 to 289, 293 to 313, 316 to 336, and 353 to 375; these read FLIC…MYLV, IAFS…GKVA, PVAI…SRAT, LFLT…VVAF, LLNG…HLIM, SLFY…VFIL, LLNR…ILTF, ALTA…LSVF, TLML…SLSS, VTLF…GVAM, ALGP…IAQV, and ALNM…LMTI.

It belongs to the major facilitator superfamily. DHA1 family. MdtL (TC 2.A.1.2.22) subfamily.

It localises to the cell inner membrane. The sequence is that of Multidrug resistance protein MdtL from Citrobacter koseri (strain ATCC BAA-895 / CDC 4225-83 / SGSC4696).